Here is a 188-residue protein sequence, read N- to C-terminus: Elongation factor P (188 aa).

Belongs to the elongation factor P family.

It is found in the cytoplasm. It participates in protein biosynthesis; polypeptide chain elongation. Functionally, involved in peptide bond synthesis. Stimulates efficient translation and peptide-bond synthesis on native or reconstituted 70S ribosomes in vitro. Probably functions indirectly by altering the affinity of the ribosome for aminoacyl-tRNA, thus increasing their reactivity as acceptors for peptidyl transferase. The chain is Elongation factor P from Sulfurimonas denitrificans (strain ATCC 33889 / DSM 1251) (Thiomicrospira denitrificans (strain ATCC 33889 / DSM 1251)).